The sequence spans 830 residues: Ribosome biogenesis protein ERB1 (830 aa).

Residues 1-141 (MAPQPLKVGT…ENKDLPVDEK (141 aa)) form a disordered region. 2 stretches are compositionally biased toward acidic residues: residues 35–44 (VSEESDEEFG) and 52–109 (MSDD…DSDS). Positions 131–141 (EENKDLPVDEK) are enriched in basic and acidic residues. 6 WD repeats span residues 481–520 (PGDT…EVWR), 523–563 (LHAG…APHI), 660–698 (KTPG…LIRT), 701–740 (SGVK…KPYK), 744–783 (YHNR…DLMQ), and 799–830 (IDGI…LWCS).

This sequence belongs to the WD repeat BOP1/ERB1 family. Component of the NOP7 complex, composed of ERB1, NOP7 and YTM1. The complex is held together by ERB1, which interacts with NOP7 via its N-terminal domain and with YTM1 via a high-affinity interaction between the seven-bladed beta-propeller domains of the 2 proteins. The NOP7 complex associates with the 66S pre-ribosome.

It is found in the nucleus. The protein localises to the nucleolus. It localises to the nucleoplasm. Component of the NOP7 complex, which is required for maturation of the 25S and 5.8S ribosomal RNAs and formation of the 60S ribosome. This Cryptococcus neoformans var. neoformans serotype D (strain B-3501A) (Filobasidiella neoformans) protein is Ribosome biogenesis protein ERB1.